The primary structure comprises 145 residues: Methyl-coenzyme M reductase I operon protein D (145 aa).

In terms of assembly, MCR is composed of three subunits: alpha, beta, and gamma. The function of proteins C and D is not known.

The chain is Methyl-coenzyme M reductase I operon protein D (mcrD) from Methanothermobacter thermautotrophicus (strain ATCC 29096 / DSM 1053 / JCM 10044 / NBRC 100330 / Delta H) (Methanobacterium thermoautotrophicum).